The sequence spans 2624 residues: Transcription factor TFIIIB component B'' homolog (2624 aa).

Residues 1-142 (MFRRARLSVK…TKEKQPCSDR (142 aa)) are disordered. Residues 1–299 (MFRRARLSVK…TYSSFRKNYY (299 aa)) form an interaction with ZBTB43 region. A compositionally biased stretch (basic and acidic residues) spans 63-77 (PQEKAPRSSTEKTGG). The segment covering 99-119 (SSTSSLVKSSVSVPSESHPLS) has biased composition (low complexity). A compositionally biased stretch (polar residues) spans 120-132 (TINQEAPQPTATS). A compositionally biased stretch (basic and acidic residues) spans 133 to 142 (TKEKQPCSDR). Residues 144-177 (RIYKAQKLREMLKEELRKEKKQWKNKYAINESQR) adopt a coiled-coil conformation. Positions 193–241 (LPDNNPMTSSLEQEKKTEKPSTPVQTREQEGKSTPNAEDNEMEEETDDG) are disordered. Residues 212–229 (PSTPVQTREQEGKSTPNA) are compositionally biased toward polar residues. Over residues 230–240 (EDNEMEEETDD) the composition is skewed to acidic residues. The region spanning 295–345 (RKNYYSKPWSNKETDMFFLAISMVGTDFSMIGQLFPHRARIEIKNKFKREE) is the Myb-like domain. The segment at 355–470 (AFQEKRPFDF…QKKRRRKKQD (116 aa)) is required for phosphorylation by CSNK2A1. 4 disordered regions span residues 379-449 (EKRK…SRED), 544-567 (LSLS…TSDL), 606-663 (ENVK…MNTL), and 729-759 (EEIG…SRKD). Residues 397-407 (TKPRKNVKVKK) are compositionally biased toward basic residues. The segment covering 552–565 (ATSVATESSESSTS) has biased composition (low complexity). Composition is skewed to basic and acidic residues over residues 637–663 (TESE…MNTL) and 736–759 (EKNE…SRKD). One copy of the 1; approximate repeat lies at 823-877 (GRREISSKEEVLEKILVSGEMAAALRETVRLDTSPKEMVPAEINTKEMQSDLKET). Residues 823–1327 (GRREISSKEE…PRENELEETS (505 aa)) form a 9 X 55 AA repeats of G-R-R-X-I-S-P-X-E-N-G-X-E-E-V-K-P-X-X-E-M-E-T-D-L-K-X-T-G-R-E-X-X-X-R-E-K-T-X-E-X-X-D-A-X-E-E-I-D-X-D-L-E-E-T region. A run of 6 repeats spans residues 878 to 932 (GRRA…LEEA), 933 to 987 (GRRE…LEET), 988 to 1040 (GRRK…LEET), 1041 to 1094 (EREV…LEET), 1095 to 1148 (EREI…LEET), and 1149 to 1203 (GRRE…LEET). Threonine 915 carries the post-translational modification Phosphothreonine. Composition is skewed to basic and acidic residues over residues 930-957 (EEAG…ETDL) and 979-1006 (EIDK…KPVD). The tract at residues 930 to 1222 (EEAGRREISP…GPEEVKPVGK (293 aa)) is disordered. Residues 1030–1041 (DATEEIDLEETE) show a composition bias toward acidic residues. Over residues 1052–1079 (EEVKPLGEMETDLKATGRDSFPRGKTPE) the composition is skewed to basic and acidic residues. Positions 1078–1103 (PEVIDAIEEIEIDLEETEREISPQEN) form a coiled coil. The span at 1082 to 1095 (DAIEEIEIDLEETE) shows a compositional bias: acidic residues. Residues 1120-1133 (ATGREISPREKTPE) show a composition bias toward basic and acidic residues. The span at 1136–1145 (DATEEIDKDL) shows a compositional bias: acidic residues. Residues 1161–1190 (EEVKPVDEMETDLKTTGREGSSREKTREVI) are compositionally biased toward basic and acidic residues. Residues 1194-1204 (EVIETDLEETE) are compositionally biased toward acidic residues. One copy of the 8; approximate repeat lies at 1204–1257 (EREISPQENGPEEVKPVGKMETDLKEIREEISQREKVLAEFSAIREKEIDLKET). Residues 1223-1284 (METDLKEIRE…VEEMEADLKE (62 aa)) adopt a coiled-coil conformation. One copy of the 9; approximate repeat lies at 1258-1327 (GKRDIPIMEK…PRENELEETS (70 aa)). Basic and acidic residues predominate over residues 1306 to 1321 (AELKQTGKTDISPREN). 10 disordered regions span residues 1306-1348 (AELK…SAVP), 1365-1440 (TPVE…RFKR), 1519-1543 (TERN…VQKN), 1684-1722 (KAKP…LQKG), 1819-1863 (STSE…ASKA), 2130-2164 (GAEM…ENKD), 2181-2200 (SEVN…QEVH), 2207-2241 (VASS…GDSV), 2444-2501 (FQSR…SRPG), and 2519-2566 (SDEP…PSPS). Over residues 1326–1344 (TSTSRQTDTHLMQSGSNDF) the composition is skewed to polar residues. Basic and acidic residues predominate over residues 1366–1378 (PVEEKRNSEKEVS). Composition is skewed to polar residues over residues 1379–1390 (SHFSHFKISSQT), 1411–1421 (SDINLSKSLPQ), and 1519–1529 (TERNLSPSNSC). The segment covering 1695-1719 (KKEEPVLEKVTTDQSKEGKPEDHLL) has biased composition (basic and acidic residues). A compositionally biased stretch (basic residues) spans 1844–1853 (RGSKRVRGKT). The span at 2131-2151 (AEMETQRETEKNASKATELEN) shows a compositional bias: basic and acidic residues. The segment covering 2470-2479 (VSDKEERTDA) has biased composition (basic and acidic residues). Residues 2488–2498 (SRTSSSKASLS) are compositionally biased toward low complexity. A compositionally biased stretch (basic residues) spans 2526–2544 (HSKKRLKPLIPGLRKKLKR).

In terms of assembly, component of TFIIIB complex. The TFIIIB complex has two activities, alpha and beta. The TFIIIB-alpha and TFIIIB-beta activities are required for transcription of genes with TFIIIC-bound internal promoters and PSE transcription factor-bound external promoters, respectively. The TFIIIB-alpha activity complex is composed of TBP, BDP1, and a complex containing both BRF2 and at least four stably associated proteins; YY1 facilitates the formation of TFIIIB-alpha activity complex. The TFIIIB-beta activity complex is composed of TBP, BDP1, and BRF1. Interacts with BRF1; this interaction diminishes during mitosis resulting in the release of BDP1 from chromosomal templates. Component of TFIIIC complex. The TFIIIC complex has two activities, C1 and C2. The TFIIIC2 activity complex is only required for transcription of the 'classical' pol III genes whereas the TFIIIC1 activity complex is required for transcription of all pol III genes. The TFIIIC1 activity complex is composed at least of BDP1. Interacts with ZBTB43. Post-translationally, phosphorylated by CSNK2A1 during mitosis, resulting in its release from chromatin and suppression of polymerase III transcription. Isoform 2 is highly expressed in cerebellum.

The protein localises to the nucleus. Functionally, general activator of RNA polymerase III transcription. Requires for transcription from all three types of polymerase III promoters. Requires for transcription of genes with internal promoter elements and with promoter elements upstream of the initiation site. This is Transcription factor TFIIIB component B'' homolog (BDP1) from Homo sapiens (Human).